The chain runs to 113 residues: Large ribosomal subunit protein P2 (113 aa).

The tract at residues 66 to 113 (PVGGGGAVAAADAAPAAAAGGDKKEAKKEEKKEESESEDDDMGFALFE) is disordered. Positions 73–85 (VAAADAAPAAAAG) are enriched in low complexity. The span at 86 to 99 (GDKKEAKKEEKKEE) shows a compositional bias: basic and acidic residues. A phosphoserine mark is found at S100 and S102.

It belongs to the eukaryotic ribosomal protein P1/P2 family. P1 and P2 exist as dimers at the large ribosomal subunit.

Plays an important role in the elongation step of protein synthesis. This Drosophila melanogaster (Fruit fly) protein is Large ribosomal subunit protein P2 (RpLP2).